The following is a 263-amino-acid chain: UPF0739 protein C1orf74 homolog (263 aa).

The protein belongs to the UPF0739 family.

In Bos taurus (Bovine), this protein is UPF0739 protein C1orf74 homolog.